The following is a 311-amino-acid chain: Porphobilinogen deaminase (311 aa).

Cysteine 242 bears the S-(dipyrrolylmethanemethyl)cysteine mark.

It belongs to the HMBS family. In terms of assembly, monomer. The cofactor is dipyrromethane.

The catalysed reaction is 4 porphobilinogen + H2O = hydroxymethylbilane + 4 NH4(+). It participates in porphyrin-containing compound metabolism; protoporphyrin-IX biosynthesis; coproporphyrinogen-III from 5-aminolevulinate: step 2/4. Functionally, tetrapolymerization of the monopyrrole PBG into the hydroxymethylbilane pre-uroporphyrinogen in several discrete steps. This is Porphobilinogen deaminase from Baumannia cicadellinicola subsp. Homalodisca coagulata.